Reading from the N-terminus, the 181-residue chain is MEQFHGTTIVSVRRKTPQGDQVAIGGDGQVTLGNIVIKGTARKVRRLYHGKVLAGFAGATADAFTLFERFEAKLEKHQGHLTRAAVELTKDWRTDRVLRKLEAMLAVADATTSLIITGNGDVLEPEDGVIAIGSGGAYAQSAAKALIDNTELTAEQIVRKSLAIAGEICIYTNMNHTVEAL.

Thr7 is a catalytic residue. Positions 166, 169, and 172 each coordinate Na(+).

It belongs to the peptidase T1B family. HslV subfamily. As to quaternary structure, a double ring-shaped homohexamer of HslV is capped on each side by a ring-shaped HslU homohexamer. The assembly of the HslU/HslV complex is dependent on binding of ATP.

The protein localises to the cytoplasm. The enzyme catalyses ATP-dependent cleavage of peptide bonds with broad specificity.. With respect to regulation, allosterically activated by HslU binding. In terms of biological role, protease subunit of a proteasome-like degradation complex believed to be a general protein degrading machinery. The chain is ATP-dependent protease subunit HslV from Variovorax paradoxus (strain S110).